The sequence spans 315 residues: PIH1 domain-containing protein 2 (315 aa).

This sequence belongs to the PIH1 family.

The chain is PIH1 domain-containing protein 2 (PIH1D2) from Homo sapiens (Human).